Consider the following 111-residue polypeptide: uncharacterized protein (111 aa).

Residues 64–86 (VLCWLVLPLYCCNLLNLFFNIFL) form a helical membrane-spanning segment.

Its subcellular location is the membrane. This is an uncharacterized protein from Saccharomyces cerevisiae (strain ATCC 204508 / S288c) (Baker's yeast).